We begin with the raw amino-acid sequence, 412 residues long: MMKEKVIFLVDMQSFYASVEKAENPHLKNRPVIVSGDPEKRGGVVLAACPLAKQKGVVNASRLWEAQEKCPEAVVLRPRMQRYIDVSLQITAILEEYTDLVEPYSIDEQFMDITGSQKLFGTPMEIAKSIQGRIMREIGVYARVGIGPNKALAKIACDNFAKKNKNGIFTLTKENMKTEMWPLPVGSMFGVGSRMKHHLNRMGISTIGGLAAFPLDLLKKKWGINGHVLWMTANGIDYSPVSTSSLDGQKAIGHGMTLPRDYEHFDKEIKVVLLELSEEVCRRSRNAGVMGQTVSVSCRGADFDWPTGFNRQVKLAEPTNSTQDVYEAVRRLFLTFWDGKPVRRLGVNLSQLSSDDIWQLNLFQDYAKKMSLGYVMDGIKNRFGDTAIIRAASLTAAGQAFERAAKIGGHYK.

The 186-residue stretch at 7-192 (IFLVDMQSFY…LPVGSMFGVG (186 aa)) folds into the UmuC domain. Mg(2+)-binding residues include Asp-11 and Asp-107. Glu-108 is an active-site residue.

This sequence belongs to the DNA polymerase type-Y family. Monomer. Mg(2+) serves as cofactor.

The protein resides in the cytoplasm. It carries out the reaction DNA(n) + a 2'-deoxyribonucleoside 5'-triphosphate = DNA(n+1) + diphosphate. Functionally, poorly processive, error-prone DNA polymerase involved in untargeted mutagenesis. Copies undamaged DNA at stalled replication forks, which arise in vivo from mismatched or misaligned primer ends. These misaligned primers can be extended by PolIV. Exhibits no 3'-5' exonuclease (proofreading) activity. May be involved in translesion synthesis (TSL), in conjunction with the beta clamp from PolIII. This Bacillus subtilis (strain 168) protein is DNA polymerase IV 2 (dinB2).